A 128-amino-acid chain; its full sequence is LIM domain-containing protein 2 (128 aa).

Met-1 is modified (N-acetylmethionine). A disordered region spans residues 1–25; sequence MFQAAGAAQATPSHEAKGSSGNSTV. One can recognise an LIM zinc-binding domain in the interval 39 to 99; sequence ETCAACQKTV…KPHFQQLFKS (61 aa). 8 residues coordinate Zn(2+): Cys-41, Cys-44, His-62, Cys-65, Cys-68, Cys-71, Cys-89, and His-92.

Interacts with ILK.

It is found in the cytoplasm. The protein resides in the nucleus. In terms of biological role, acts as an activator of the protein-kinase ILK, thereby regulating cell motility. The chain is LIM domain-containing protein 2 (Limd2) from Rattus norvegicus (Rat).